A 104-amino-acid chain; its full sequence is Thioredoxin (104 aa).

Residues 2–104 (AIVKVTDSNF…NLAEVLDKHL (103 aa)) form the Thioredoxin domain. Cysteines 29 and 32 form a disulfide.

It belongs to the thioredoxin family.

Component of the thioredoxin-thioredoxin reductase system. Participates in various redox reactions through the reversible oxidation of its active center dithiol to a disulfide and catalyzes dithiol-disulfide exchange reactions. The protein is Thioredoxin (trxA) of Staphylococcus haemolyticus (strain JCSC1435).